Reading from the N-terminus, the 163-residue chain is Ribonuclease P protein subunit p25-like protein (163 aa).

Disordered regions lie at residues 1–24 and 126–163; these read MEQYRRAGSVELPASSPMPQLPPD and LDPSECGYQPPGAPPGLGSIPSPSCGPRPRRRARDTRS. The span at 153-163 shows a compositional bias: basic residues; the sequence is RPRRRARDTRS.

The protein belongs to the histone-like Alba family.

The protein resides in the nucleus. In terms of biological role, may be a component of ribonuclease P or MRP. In Mus musculus (Mouse), this protein is Ribonuclease P protein subunit p25-like protein (Rpp25l).